Reading from the N-terminus, the 273-residue chain is Transmembrane epididymal protein 1 (273 aa).

The next 6 helical transmembrane spans lie at 34-54, 72-92, 96-116, 129-149, 158-178, and 195-215; these read IVTG…GMVL, LTMF…KNVL, CVGL…LLMV, VYSL…AELW, LMET…GFIL, and IMFV…FLLG.

Belongs to the TMEM45 family.

Its subcellular location is the membrane. The polypeptide is Transmembrane epididymal protein 1 (TEDDM1) (Homo sapiens (Human)).